The sequence spans 643 residues: MVNTLSDVNNTDNYGAGQIQVLEGLEAVRKRPGMYIGSTSERGLHHLVWEIVDNSIDEALAGYASHIEVVIEKDNWIKVTDNGRGIPVDIQEKMGRPAVEVILTVLHAGGKFGGGGYKVSGGLHGVGSSVVNALSQDLEVYVHRNGTIYHQAYKQGVPQFDLKEIGDTDKTGTAIRFKADKEIFTETTVYNYETLQKRIRELAFLNKGIQITLKDEREEEVREDSYHYEGGIKSYVDLLNENKEPLHDEPIYIHQSKDDIEVEIALQYNSGYATNLLTYANNIHTYEGGTHEDGFKRALTRVLNSYGTQSKIIKEDKDRLSGEDTREGLTAVVSIKHGDPQFEGQTKTKLGNSEVRQVVDRLFSEHFERFLYENPSVGRIIVEKGIMASRARVAAKKAREVTRRKSALDVSSLPGKLADCSSKNPEESEIFLVEGDSAGGSTKSGRDSRTQAILPLRGKILNVEKARLDRILNNNEIRQMITAFGTGIGGEFDISKARYHKIVIMTDADVDGAHIRTLLLTFFYRFMRPLIEAGYVYIAQPPLYKLTQGKQKYYVFNDRELDKLKQELNPSPKWSIARYKGLGEMNADQLWETTMNPEHRSMLQVRLEDAIDADQTFEMLMGDVVENRRQFIEDNAVYANLDF.

In terms of domain architecture, Toprim spans 428-542 (SEIFLVEGDS…AGYVYIAQPP (115 aa)). Positions 434, 507, and 509 each coordinate Mg(2+).

The protein belongs to the type II topoisomerase GyrB family. In terms of assembly, heterotetramer, composed of two GyrA and two GyrB chains. In the heterotetramer, GyrA contains the active site tyrosine that forms a transient covalent intermediate with DNA, while GyrB binds cofactors and catalyzes ATP hydrolysis. Requires Mg(2+) as cofactor. The cofactor is Mn(2+). Ca(2+) is required as a cofactor.

Its subcellular location is the cytoplasm. It carries out the reaction ATP-dependent breakage, passage and rejoining of double-stranded DNA.. Functionally, a type II topoisomerase that negatively supercoils closed circular double-stranded (ds) DNA in an ATP-dependent manner to modulate DNA topology and maintain chromosomes in an underwound state. Negative supercoiling favors strand separation, and DNA replication, transcription, recombination and repair, all of which involve strand separation. Also able to catalyze the interconversion of other topological isomers of dsDNA rings, including catenanes and knotted rings. Type II topoisomerases break and join 2 DNA strands simultaneously in an ATP-dependent manner. The sequence is that of DNA gyrase subunit B from Staphylococcus epidermidis (strain ATCC 35984 / DSM 28319 / BCRC 17069 / CCUG 31568 / BM 3577 / RP62A).